The chain runs to 437 residues: GTPase Obg (437 aa).

Positions 2 to 160 (SLFLDTARIE…KILLLELRVL (159 aa)) constitute an Obg domain. In terms of domain architecture, OBG-type G spans 161-338 (ADVGLVGFPS…LLARTSELLA (178 aa)). GTP-binding positions include 167-174 (GFPSVGKS), 192-196 (FTTIT), 214-217 (DMPG), 284-287 (NKMD), and 319-321 (SGL). Positions 174 and 194 each coordinate Mg(2+). An OCT domain is found at 359 to 437 (GFEDEEKPFK…IQKFEFEFVD (79 aa)).

This sequence belongs to the TRAFAC class OBG-HflX-like GTPase superfamily. OBG GTPase family. As to quaternary structure, monomer. Requires Mg(2+) as cofactor.

It localises to the cytoplasm. Functionally, an essential GTPase which binds GTP, GDP and possibly (p)ppGpp with moderate affinity, with high nucleotide exchange rates and a fairly low GTP hydrolysis rate. Plays a role in control of the cell cycle, stress response, ribosome biogenesis and in those bacteria that undergo differentiation, in morphogenesis control. In Lactococcus lactis subsp. cremoris (strain SK11), this protein is GTPase Obg.